Reading from the N-terminus, the 333-residue chain is MSSSSGVPESWIASFCSLLGHEYFAEVSEEFIEDDFNLTGLQTQVAMYKEALEMILDVEPEDDDDEEEEDEEDEEDMSGGDGINKPHGERRHHSRIASDLSVIESSAEMLYGLIHQRFICSRAGIQQMSEKYELGHFGICPRTNCNQTRTLPVGLSDTPGEDTVKLFCPSCLDVYVPPNSRFQTVDGAFFGRTFGALFLMTFPEYDLTKTGAESVSNLTRSGSDDTTVINGMYARNIAPGLGRGKIYQPKIYGFKVSEIARSGPRMQWLRSKPDDLSVLDEARRYAEQQGSDDEDESMGVSSRTASRRRGPPRRQKQNGSPMAIEQNGAESEL.

The span at 58 to 78 (VEPEDDDDEEEEDEEDEEDMS) shows a compositional bias: acidic residues. Disordered stretches follow at residues 58–92 (VEPE…ERRH) and 282–333 (ARRY…ESEL). Positions 305-316 (ASRRRGPPRRQK) are enriched in basic residues.

It belongs to the casein kinase 2 subunit beta family. As to quaternary structure, tetramer composed of two alpha chains, one beta chain and one beta' chain. In terms of processing, phosphorylated by alpha subunit.

Regulatory subunit of casein kinase II/CK2. As part of the kinase complex regulates the basal catalytic activity of the alpha subunit a constitutively active serine/threonine-protein kinase that phosphorylates a large number of substrates containing acidic residues C-terminal to the phosphorylated serine or threonine. The chain is Casein kinase II subunit beta-1 (ckb-1) from Neurospora crassa (strain ATCC 24698 / 74-OR23-1A / CBS 708.71 / DSM 1257 / FGSC 987).